Consider the following 487-residue polypeptide: Betaine aldehyde dehydrogenase (487 aa).

2 residues coordinate K(+): Ile-27 and Asp-93. 149-151 (GAW) is an NAD(+) binding site. Lys-161 functions as the Charge relay system in the catalytic mechanism. Residues 175–178 (KPSE) and 228–231 (SVPT) each bind NAD(+). Leu-243 serves as a coordination point for K(+). Glu-249 serves as the catalytic Proton acceptor. NAD(+)-binding residues include Gly-251, Cys-283, and Glu-384. Cys-283 functions as the Nucleophile in the catalytic mechanism. Cysteine sulfenic acid (-SOH) is present on Cys-283. Residues Lys-454 and Gly-457 each coordinate K(+). Residue Glu-461 is the Charge relay system of the active site.

The protein belongs to the aldehyde dehydrogenase family. As to quaternary structure, dimer of dimers. K(+) serves as cofactor.

The catalysed reaction is betaine aldehyde + NAD(+) + H2O = glycine betaine + NADH + 2 H(+). Its pathway is amine and polyamine biosynthesis; betaine biosynthesis via choline pathway; betaine from betaine aldehyde: step 1/1. Functionally, involved in the biosynthesis of the osmoprotectant glycine betaine. Catalyzes the irreversible oxidation of betaine aldehyde to the corresponding acid. In Brucella anthropi (strain ATCC 49188 / DSM 6882 / CCUG 24695 / JCM 21032 / LMG 3331 / NBRC 15819 / NCTC 12168 / Alc 37) (Ochrobactrum anthropi), this protein is Betaine aldehyde dehydrogenase.